Reading from the N-terminus, the 182-residue chain is uncharacterized protein (182 aa).

Transmembrane regions (helical) follow at residues 19–39, 51–71, 87–107, and 118–138; these read LFGI…SIVS, IYLV…VVFI, IFTV…IELF, and CSPF…LAMC.

It is found in the membrane. This is an uncharacterized protein from Caenorhabditis elegans.